Consider the following 637-residue polypeptide: Sodium-dependent proline transporter (637 aa).

Residues 1 to 45 (MKKLQEAHLRKPVTPDLLMTPSDQGDVDLDVDFAADRGNWTGKLD) are Cytoplasmic-facing. Residue T20 is modified to Phosphothreonine. Position 22 is a phosphoserine (S22). The next 3 membrane-spanning stretches (helical) occupy residues 46-66 (FLLS…FPYR), 74-93 (AFLV…LFFL), and 117-137 (GAGA…NMII). Residues 138–214 (AYVLFYLFAS…QGIGRPGEIR (77 aa)) lie on the Extracellular side of the membrane. An N-linked (GlcNAc...) asparagine glycan is attached at N182. 9 helical membrane-spanning segments follow: residues 215–233 (WNLC…LCIL), 242–259 (VVYF…MLLV), 295–312 (IFYS…FASY), 324–345 (FIVT…FSVL), 378–397 (LPLS…TLGL), 425–443 (VFSG…ILTT), 459–479 (SFGL…VYGI), 500–519 (ACWL…YSIV), and 538–556 (LGIL…GMLV). The Cytoplasmic portion of the chain corresponds to 557 to 637 (AVLREEGSLW…IAEEEEESMM (81 aa)). S573 and S582 each carry phosphoserine. Residue T588 is modified to Phosphothreonine. At Y591 the chain carries Phosphotyrosine. A phosphoserine mark is found at S598 and S600.

Belongs to the sodium:neurotransmitter symporter (SNF) (TC 2.A.22) family. SLC6A7 subfamily. Expressed in subpopulations of putative glutamatergic pathways of rat brain.

It is found in the synaptic cell membrane. It catalyses the reaction L-proline(out) + chloride(out) + 2 Na(+)(out) = L-proline(in) + chloride(in) + 2 Na(+)(in). It carries out the reaction L-pipecolate(out) + chloride(out) + 2 Na(+)(out) = L-pipecolate(in) + chloride(in) + 2 Na(+)(in). Functionally, brain specific sodium (and chloride)-dependent proline transporter. Terminates the action of proline by its high affinity sodium-dependent reuptake into presynaptic terminals. The protein is Sodium-dependent proline transporter (Slc6a7) of Rattus norvegicus (Rat).